Reading from the N-terminus, the 977-residue chain is Serine/threonine-protein kinase N2 (977 aa).

3 REM-1 domains span residues 24 to 100 (NLDF…HIVV), 114 to 194 (DTPK…TSEI), and 200 to 280 (DVTT…ELPK). The 171-residue stretch at 298–468 (PPNSPRQSIM…LYLEPQGTLF (171 aa)) folds into the C2 domain. 2 disordered regions span residues 342 to 381 (GRSK…LSKS) and 531 to 576 (AADL…KRNS). The span at 358 to 378 (EARSSFMSRGNKNKSGSSRTL) shows a compositional bias: polar residues. Residues 650-909 (FKCVAVLGRG…AEEVKRHPFF (260 aa)) form the Protein kinase domain. ATP-binding positions include 656–664 (LGRGHFGKV) and lysine 679. The active-site Proton acceptor is the aspartate 775. Positions 910 to 977 (RDMDWPGLLA…ADFDYIADWC (68 aa)) constitute an AGC-kinase C-terminal domain.

Belongs to the protein kinase superfamily. AGC Ser/Thr protein kinase family. PKC subfamily. Post-translationally, autophosphorylated. Phosphorylated. In terms of processing, proteolytically cleaved.

The protein localises to the cytoplasm. It is found in the nucleus. The protein resides in the membrane. It localises to the cell projection. Its subcellular location is the lamellipodium. The protein localises to the cytoskeleton. It is found in the cleavage furrow. The protein resides in the midbody. It localises to the cell junction. It catalyses the reaction L-seryl-[protein] + ATP = O-phospho-L-seryl-[protein] + ADP + H(+). The enzyme catalyses L-threonyl-[protein] + ATP = O-phospho-L-threonyl-[protein] + ADP + H(+). With respect to regulation, kinase activity is activated upon binding to GTP-bound Rho/Rac GTPases. Activated by lipids, particularly cardiolipin and to a lesser extent by other acidic phospholipids and unsaturated fatty acids. Two specific sites, Thr-809 (activation loop of the kinase domain) and Thr-951 (turn motif), may be needed to be phosphorylated for its full activation. Its function is as follows. Pkc-related serine/threonine-protein kinase and Rho/Rac effector protein that participates in specific signal transduction responses in the cell. May play a role in the regulation of cell cycle progression, actin cytoskeleton assembly, cell migration, cell adhesion and transcription activation signaling processes. The protein is Serine/threonine-protein kinase N2 (pkn2) of Danio rerio (Zebrafish).